A 204-amino-acid chain; its full sequence is uncharacterized protein (204 aa).

Positions 1–24 are cleaved as a signal peptide; the sequence is MPINTFCKISLFICALFCSTVTLA.

This is an uncharacterized protein from Pasteurella multocida (strain Pm70).